The primary structure comprises 845 residues: MPLSYQHFRKLLLLDDGTEAGPLEEELPRLADADLNRRVAEDLNLGNLNVSIPWTHKVGNFTGLYSSTVPIFNPEWQTPSFPNIHLQEDIINRCQQFVGPLTVNEKRRLKLIMPARFYPTHTKYLPLDKGIKPYYPDQVVNHYFQTRHYLHTLWKAGILYKRETTRSASFCGSPYSWEQELQHGRLVIKTSQRHGDESFCSQPSGILSRSSVGPCIRSQLKQSRLGLQPHQGPLASSQPGRSGSIRARVHPSTRRYFGVEPSGSGHIDHSVNNSSSCLHQSAVRKAAYSHLSTSKRQSSSGHAVEFHCLPPNSAGSQSQGSVSSCWWLQFRNSKPCSEYCLSHLVNLREDWGPCDEHGEHHIRIPRTPARVTGGVFLVDKNPHNTAESRLVVDFSQFSRGITRVSWPKFAVPNLQSLTNLLSSNLSWLSLDVSAAFYHIPLHPAAMPHLLIGSSGLSRYVARLSSNSRINNNQYGTMQNLHDSCSRQLYVSLMLLYKTYGWKLHLYSHPIVLGFRKIPMGVGLSPFLLAQFTSAICSVVRRAFPHCLAFSYMDDVVLGAKSVQHREALYTAVTNFLLSLGIHLNPNKTKRWGYSLNFMGYIIGSWGTLPQDHIVQKIKHCFRKLPVNRPIDWKVCQRIVGLLGFAAPFTQCGYPALMPLYACIQAKQAFTFSPTYKAFLSKQYMNLYPVARQRPGLCQVFADATPTGWGLAIGHQRMRGTFVAPLPIHTAELLAACFARSRSGAKLIGTDNSVVLSRKYTSFPWLLGCAANWILRGTSFVYVPSALNPADDPSRGRLGLYRPLLRLPFQPTTGRTSLYAVSPSVPSHLPVRVHFASPLHVAWRPP.

The segment at 1-179 (MPLSYQHFRK…FCGSPYSWEQ (179 aa)) is terminal protein domain (TP). The interval 180 to 348 (ELQHGRLVIK…YCLSHLVNLR (169 aa)) is spacer. The tract at residues 226 to 245 (GLQPHQGPLASSQPGRSGSI) is disordered. The tract at residues 349–692 (EDWGPCDEHG…YMNLYPVARQ (344 aa)) is polymerase/reverse transcriptase domain (RT). The 244-residue stretch at 359–602 (EHHIRIPRTP…YSLNFMGYII (244 aa)) folds into the Reverse transcriptase domain. Residues Asp-431, Asp-553, and Asp-554 each coordinate Mg(2+).

The protein belongs to the hepadnaviridae P protein family.

It catalyses the reaction DNA(n) + a 2'-deoxyribonucleoside 5'-triphosphate = DNA(n+1) + diphosphate. The enzyme catalyses Endonucleolytic cleavage to 5'-phosphomonoester.. With respect to regulation, activated by host HSP70 and HSP40 in vitro to be able to bind the epsilon loop of the pgRNA. Because deletion of the RNase H region renders the protein partly chaperone-independent, the chaperones may be needed indirectly to relieve occlusion of the RNA-binding site by this domain. Inhibited by several reverse-transcriptase inhibitors: Lamivudine, Adefovir and Entecavir. Its function is as follows. Multifunctional enzyme that converts the viral RNA genome into dsDNA in viral cytoplasmic capsids. This enzyme displays a DNA polymerase activity that can copy either DNA or RNA templates, and a ribonuclease H (RNase H) activity that cleaves the RNA strand of RNA-DNA heteroduplexes in a partially processive 3'- to 5'-endonucleasic mode. Neo-synthesized pregenomic RNA (pgRNA) are encapsidated together with the P protein, and reverse-transcribed inside the nucleocapsid. Initiation of reverse-transcription occurs first by binding the epsilon loop on the pgRNA genome, and is initiated by protein priming, thereby the 5'-end of (-)DNA is covalently linked to P protein. Partial (+)DNA is synthesized from the (-)DNA template and generates the relaxed circular DNA (RC-DNA) genome. After budding and infection, the RC-DNA migrates in the nucleus, and is converted into a plasmid-like covalently closed circular DNA (cccDNA). The activity of P protein does not seem to be necessary for cccDNA generation, and is presumably released from (+)DNA by host nuclear DNA repair machinery. The polypeptide is Protein P (Homo sapiens (Human)).